A 529-amino-acid polypeptide reads, in one-letter code: ATP synthase F(1) complex catalytic subunit beta, mitochondrial (529 aa).

Residues 1–46 (MLSLVGRVASASASGALRGLSPSAALPQAQLLLRAAPAGVHPARDY) constitute a mitochondrion transit peptide. Ser106 carries O-linked (GlcNAc) serine glycosylation. N6-acetyllysine; alternate occurs at positions 124, 133, and 161. Lys124, Lys133, and Lys161 each carry N6-succinyllysine; alternate. N6-acetyllysine is present on Lys198. ADP contacts are provided by Gly209, Val210, Gly211, Lys212, Thr213, and Val214. An ATP-binding site is contributed by Gly209. Gly209, Val210, Gly211, Lys212, and Thr213 together coordinate phosphate. ATP contacts are provided by Gly211, Lys212, Thr213, and Val214. Thr213 serves as a coordination point for Mg(2+). Residue Glu238 coordinates Mg(2+). Position 239 (Arg239) interacts with ATP. An N6-acetyllysine; alternate mark is found at Lys259 and Lys264. Lys259 and Lys264 each carry N6-succinyllysine; alternate. Position 312 is a phosphothreonine (Thr312). An N6-acetyllysine modification is found at Lys426. Position 433 is a phosphoserine (Ser433). 2 positions are modified to N6-acetyllysine: Lys480 and Lys485. N6-acetyllysine; alternate is present on Lys522. Residue Lys522 is modified to N6-succinyllysine; alternate. Ser529 carries the phosphoserine modification.

The protein belongs to the ATPase alpha/beta chains family. As to quaternary structure, homotrimer. Component of the ATP synthase complex composed at least of ATP5F1A/subunit alpha, ATP5F1B/subunit beta, ATP5MC1/subunit c (homooctomer), MT-ATP6/subunit a, MT-ATP8/subunit 8, ATP5ME/subunit e, ATP5MF/subunit f, ATP5MG/subunit g, ATP5MK/subunit k, ATP5MJ/subunit j, ATP5F1C/subunit gamma, ATP5F1D/subunit delta, ATP5F1E/subunit epsilon, ATP5PF/subunit F6, ATP5PB/subunit b, ATP5PD/subunit d, ATP5PO/subunit OSCP. ATP synthase complex consists of a soluble F(1) head domain (subunits alpha(3) and beta(3)) - the catalytic core - and a membrane F(0) domain - the membrane proton channel (subunits c, a, 8, e, f, g, k and j). These two domains are linked by a central stalk (subunits gamma, delta, and epsilon) rotating inside the F1 region and a stationary peripheral stalk (subunits F6, b, d, and OSCP). Interacts with PPIF. Interacts with BCL2L1 isoform BCL-X(L); the interaction mediates the association of BCL2L1 isoform BCL-X(L) with the mitochondrial membrane F(1)F(0) ATP synthase and enhances neurons metabolic efficiency. Interacts with CLN5 and PPT1. Interacts with S100A1; this interaction increases F1-ATPase activity. Interacts with MTLN. Interacts with TTC5/STRAP; the interaction results in decreased mitochondrial ATP production. Acetylation of Lys-133 is observed in liver mitochondria from fasted mice but not from fed mice.

It is found in the mitochondrion inner membrane. The catalysed reaction is ATP + H2O + 4 H(+)(in) = ADP + phosphate + 5 H(+)(out). In terms of biological role, catalytic subunit beta, of the mitochondrial membrane ATP synthase complex (F(1)F(0) ATP synthase or Complex V) that produces ATP from ADP in the presence of a proton gradient across the membrane which is generated by electron transport complexes of the respiratory chain. ATP synthase complex consist of a soluble F(1) head domain - the catalytic core - and a membrane F(1) domain - the membrane proton channel. These two domains are linked by a central stalk rotating inside the F(1) region and a stationary peripheral stalk. During catalysis, ATP synthesis in the catalytic domain of F(1) is coupled via a rotary mechanism of the central stalk subunits to proton translocation. In vivo, can only synthesize ATP although its ATP hydrolase activity can be activated artificially in vitro. With the subunit alpha (ATP5F1A), forms the catalytic core in the F(1) domain. The sequence is that of ATP synthase F(1) complex catalytic subunit beta, mitochondrial from Mus musculus (Mouse).